The following is a 66-amino-acid chain: Large ribosomal subunit protein bL33c (66 aa).

This sequence belongs to the bacterial ribosomal protein bL33 family.

The protein localises to the plastid. Its subcellular location is the chloroplast. This chain is Large ribosomal subunit protein bL33c, found in Citrus sinensis (Sweet orange).